The primary structure comprises 342 residues: MTDRYILAVESSCDETSVAILKNESTLLSNVIASQVESHKRFGGVVPEVASRHHVEVITTCFEDALQEAGISASDLSAVAVTYGPGLVGALLVGLAAAKAFAWANHLPLIPVNHMAGHLMAAREQKPLVYPLIALLVSGGHTELVYVPEPGDYHIIGETRDDAVGEAYDKVGRVMGLTYPAGREIDQLAHKGQDTYHFPRAMITEDHLEFSFSGLKSAFINLHHNAKQKGDELILEDLCASFQAAVLDILLAKTKKALSRYPAKMLVVAGGVAANQGLRDRLAQEITHIEVVIPKLRLCGDNAGMIALAAAIEYDKQHFANMSLNAKPSLAFDQFPDSFVIN.

2 residues coordinate Fe cation: His-114 and His-118. Substrate is bound by residues 136-140 (LVSGG), Asp-169, Gly-182, Asp-186, and Asn-275. Asp-301 lines the Fe cation pocket.

This sequence belongs to the KAE1 / TsaD family. Fe(2+) serves as cofactor.

Its subcellular location is the cytoplasm. It catalyses the reaction L-threonylcarbamoyladenylate + adenosine(37) in tRNA = N(6)-L-threonylcarbamoyladenosine(37) in tRNA + AMP + H(+). Its function is as follows. Required for the formation of a threonylcarbamoyl group on adenosine at position 37 (t(6)A37) in tRNAs that read codons beginning with adenine. Is involved in the transfer of the threonylcarbamoyl moiety of threonylcarbamoyl-AMP (TC-AMP) to the N6 group of A37, together with TsaE and TsaB. TsaD likely plays a direct catalytic role in this reaction. The polypeptide is tRNA N6-adenosine threonylcarbamoyltransferase (Streptococcus pyogenes serotype M3 (strain ATCC BAA-595 / MGAS315)).